A 256-amino-acid chain; its full sequence is N-acetyl-D-glucosamine kinase (256 aa).

Residues 4–11 (GFDMGGTK) and 133–140 (GVGGGLIV) contribute to the ATP site. Zn(2+) contacts are provided by H157, C177, C179, and C184.

This sequence belongs to the ROK (NagC/XylR) family. NagK subfamily.

The catalysed reaction is N-acetyl-D-glucosamine + ATP = N-acetyl-D-glucosamine 6-phosphate + ADP + H(+). It participates in cell wall biogenesis; peptidoglycan recycling. Its function is as follows. Catalyzes the phosphorylation of N-acetyl-D-glucosamine (GlcNAc) derived from cell-wall degradation, yielding GlcNAc-6-P. The chain is N-acetyl-D-glucosamine kinase (nagK) from Yersinia pestis bv. Antiqua (strain Nepal516).